Here is a 783-residue protein sequence, read N- to C-terminus: uncharacterized protein (783 aa).

A disordered region spans residues 1–22; the sequence is MVNTRGYTTLPNVEEPANNSQD. The Cytoplasmic segment spans residues 1–109; the sequence is MVNTRGYTTL…SKIGNVMVMR (109 aa). A helical; Signal-anchor for type II membrane protein transmembrane segment spans residues 110-127; it reads RIFYIMMMSIIAALIIAS. Residues 128–783 are Extracellular-facing; that stretch reads DRLPNGKARG…NLHGINTNEF (656 aa). N-linked (GlcNAc...) asparagine glycosylation is found at Asn-139 and Asn-213. A PA domain is found at 241–333; sequence HNGQLNNIPV…GTGDALTPEW (93 aa). A glycan (N-linked (GlcNAc...) asparagine) is linked at Asn-529.

The protein resides in the cell membrane. This is an uncharacterized protein from Saccharomyces cerevisiae (strain ATCC 204508 / S288c) (Baker's yeast).